Reading from the N-terminus, the 806-residue chain is Phenylalanine--tRNA ligase beta subunit (806 aa).

A tRNA-binding domain is found at 40-153; it reads FNSPDYLQLA…ADAIIIDHVS (114 aa). One can recognise a B5 domain in the interval 413 to 487; that stretch reads PFSKKLTVNF…KLIDINKLKP (75 aa). 4 residues coordinate Mg(2+): aspartate 465, aspartate 471, glutamate 474, and glutamate 475.

The protein belongs to the phenylalanyl-tRNA synthetase beta subunit family. Type 1 subfamily. As to quaternary structure, tetramer of two alpha and two beta subunits. Mg(2+) is required as a cofactor.

It localises to the cytoplasm. The catalysed reaction is tRNA(Phe) + L-phenylalanine + ATP = L-phenylalanyl-tRNA(Phe) + AMP + diphosphate + H(+). This Mycoplasma genitalium (strain ATCC 33530 / DSM 19775 / NCTC 10195 / G37) (Mycoplasmoides genitalium) protein is Phenylalanine--tRNA ligase beta subunit (pheT).